The chain runs to 744 residues: MASEGASIPSPVVRQIDKQFLICSICLERYKNPKVLPCLHTFCERCLQNYIPAHSLTLSCPVCRQTSILPEKGVAALQNNFFITNLMDVLQRTPGSNGEDSSILETVTAVAAGKPLSCPNHDGNVMEFYCQSCETAMCRECTEGEHAEHPTVPLKDVVEQHKASLQVQLDAVNKRLPEIDSALQFISEIIHQLTNQKASIVDDIHSTFDELQKTLNVRKSVLLMELEVNYGLKHKVLQSQLDTLLQGQESIKSCSNFTAQALNHGTETEVLLVKKQMSEKLNELADQDFPLHPRENDQLDFIVETEGLKKSIHNLGTILTTNAVASETVATGEGLRQTIIGQPMSVTITTKDKDGELCKTGNAYLTAELSTPDGSVADGEILDNKNGTYEFLYTVQKEGDFTLSLRLYDQHIRGSPFKLKVIRSADVSPTTEGVKRRVKSPGSGHVKQKAVKRPASMYSTGKRKENPIEDDLIFRVGTKGRNKGEFTNLQGVAASTSGKILIADSNNQCVQIFSNDGQFKSRFGIRGRSPGQLQRPTGVAVHPSGDIIIADYDNKWVSIFSNDGKFKTKIGSGKLMGPKGVSVDRNGHIIVVDNKACCVFIFQPNGKIVTRFGSRGNGDRQFAGPHFAAVNSNNEIIITDFHNHSVKVFNQEGEFMLKFGSNGEGNGQFNAPTGVAVDSNGNIIVADWGNSRIQVFDGSGSFLSYINTSADPLYGPQGLALTSDGHVVVADSGNHCFKVYRYLQ.

Ser-10 bears the Phosphoserine mark. Residues 23-64 (CSICLERYKNPKVLPCLHTFCERCLQNYIPAHSLTLSCPVCR) form an RING-type zinc finger. Residues 113 to 154 (GKPLSCPNHDGNVMEFYCQSCETAMCRECTEGEHAEHPTVPL) form a B box-type zinc finger. The Zn(2+) site is built by Cys-118, His-121, Cys-141, and His-146. The stretch at 320 to 421 (TTNAVASETV…IRGSPFKLKV (102 aa)) is one Filamin repeat. At Thr-371 the chain carries Phosphothreonine. Phosphoserine occurs at positions 375, 424, and 428. The interval 432–462 (EGVKRRVKSPGSGHVKQKAVKRPASMYSTGK) is disordered. 6 NHL repeats span residues 473 to 516 (IFRV…FSND), 520 to 563 (KSRF…FSND), 564 to 605 (GKFK…FQPN), 609 to 652 (VTRF…FNQE), 656 to 699 (MLKF…FDGS), and 700 to 743 (GSFL…YRYL).

This sequence belongs to the TRIM/RBCC family. In terms of assembly, forms homooligomers. Interacts with TRIM3; this interaction reduces TRIM2 activity. Interacts with myosin V; myosin V may not be a substrate for ubiquitination. Interacts with NEFL. Interacts with phosphorylated BCL2L11. Interacts with SIRPA. Post-translationally, RING-type zinc finger-dependent and UBE2D1-dependent autoubiquitination. In terms of tissue distribution, highly expressed in the cerebellum, hippocampus, retina and spinal cord. In the cerebellum, strongest expression in Purkinje cells and in the deep cerebellar nuclei. In retina, high expression in the ganglionic cell layer, inner nuclear layer and inthe outer plexiform layer. Particularly high expression in the hippocampus, in pyramidal cells of CA1-CA3 hippocampal areas and ingranule cells of the dentate gyrus.

The protein localises to the cytoplasm. The catalysed reaction is S-ubiquitinyl-[E2 ubiquitin-conjugating enzyme]-L-cysteine + [acceptor protein]-L-lysine = [E2 ubiquitin-conjugating enzyme]-L-cysteine + N(6)-ubiquitinyl-[acceptor protein]-L-lysine.. It participates in protein modification; protein ubiquitination. UBE2D1-dependent E3 ubiquitin-protein ligase that mediates the ubiquitination of NEFL and of phosphorylated BCL2L11. Plays a neuroprotective function. May play a role in neuronal rapid ischemic tolerance. Plays a role in antiviral immunity and limits new world arenavirus infection independently of its ubiquitin ligase activity by decreasing virus internalization. The chain is Tripartite motif-containing protein 2 (Trim2) from Mus musculus (Mouse).